Here is a 231-residue protein sequence, read N- to C-terminus: Axial regulator YABBY 4 (231 aa).

The segment at 26–53 adopts a C4-type zinc-finger fold; sequence CGFCTTILLVSVPFTSLSMVVTVRCGHC. 2 disordered regions span residues 98-120 and 211-231; these read KVNQ…EDED and NNGF…SPFE.

This sequence belongs to the YABBY family. Interacts with SPL/NZZ.

Its subcellular location is the nucleus. In terms of biological role, essential for the formation and the abaxial-adaxial asymmetric growth of the ovule outer integument. The sequence is that of Axial regulator YABBY 4 (YAB4) from Arabidopsis thaliana (Mouse-ear cress).